A 332-amino-acid chain; its full sequence is Delta-aminolevulinic acid dehydratase (332 aa).

The active-site Schiff-base intermediate with substrate is the lysine 199. 5-aminolevulinate-binding residues include arginine 209 and lysine 221. A Mg(2+)-binding site is contributed by glutamate 237. The active-site Schiff-base intermediate with substrate is lysine 252. Residues serine 278 and tyrosine 317 each contribute to the 5-aminolevulinate site.

Belongs to the ALAD family. Homooctamer.

The enzyme catalyses 2 5-aminolevulinate = porphobilinogen + 2 H2O + H(+). Its pathway is porphyrin-containing compound metabolism; protoporphyrin-IX biosynthesis; coproporphyrinogen-III from 5-aminolevulinate: step 1/4. In terms of biological role, catalyzes an early step in the biosynthesis of tetrapyrroles. Binds two molecules of 5-aminolevulinate per subunit, each at a distinct site, and catalyzes their condensation to form porphobilinogen. This Chlamydia pneumoniae (Chlamydophila pneumoniae) protein is Delta-aminolevulinic acid dehydratase (hemB).